Consider the following 395-residue polypeptide: Putative pyridoxal phosphate-dependent acyltransferase (395 aa).

Residue 110 to 111 coordinates pyridoxal 5'-phosphate; it reads GF. Substrate is bound at residue His135. Pyridoxal 5'-phosphate-binding positions include Ser185, 210 to 213, and 240 to 243; these read DDAH and TLSK. Lys243 is modified (N6-(pyridoxal phosphate)lysine). Thr357 is a binding site for substrate.

It belongs to the class-II pyridoxal-phosphate-dependent aminotransferase family. In terms of assembly, homodimer. Pyridoxal 5'-phosphate is required as a cofactor.

The chain is Putative pyridoxal phosphate-dependent acyltransferase from Staphylococcus aureus (strain MRSA252).